Reading from the N-terminus, the 166-residue chain is Small ribosomal subunit protein uS5 (166 aa).

One can recognise an S5 DRBM domain in the interval 11 to 74 (LVEKLVAVDR…EAARRNMITV (64 aa)).

This sequence belongs to the universal ribosomal protein uS5 family. As to quaternary structure, part of the 30S ribosomal subunit. Contacts proteins S4 and S8.

Functionally, with S4 and S12 plays an important role in translational accuracy. In terms of biological role, located at the back of the 30S subunit body where it stabilizes the conformation of the head with respect to the body. The chain is Small ribosomal subunit protein uS5 from Acinetobacter baumannii (strain ATCC 17978 / DSM 105126 / CIP 53.77 / LMG 1025 / NCDC KC755 / 5377).